A 345-amino-acid chain; its full sequence is Uroporphyrinogen decarboxylase (345 aa).

Substrate-binding positions include Arg26–Arg30, Asp76, Tyr151, Ser205, and His321.

Belongs to the uroporphyrinogen decarboxylase family. Homodimer.

The protein resides in the cytoplasm. It catalyses the reaction uroporphyrinogen III + 4 H(+) = coproporphyrinogen III + 4 CO2. It participates in porphyrin-containing compound metabolism; protoporphyrin-IX biosynthesis; coproporphyrinogen-III from 5-aminolevulinate: step 4/4. In terms of biological role, catalyzes the decarboxylation of four acetate groups of uroporphyrinogen-III to yield coproporphyrinogen-III. The chain is Uroporphyrinogen decarboxylase from Phenylobacterium zucineum (strain HLK1).